Here is a 283-residue protein sequence, read N- to C-terminus: Cyclin-C (283 aa).

The region spanning 20–151 is the Cyclin N-terminal domain; the sequence is DLLKERQKDL…LLELMDCCLI (132 aa). Positions 252 to 283 are disordered; it reads TILSKMPKPKPPPNSEGEQGPNGSQNSSYSQS. The span at 272 to 283 shows a compositional bias: polar residues; the sequence is PNGSQNSSYSQS. The residue at position 275 (Ser275) is a Phosphoserine.

This sequence belongs to the cyclin family. Cyclin C subfamily. In terms of assembly, component of the Mediator complex, which is composed of MED1, MED4, MED6, MED7, MED8, MED9, MED10, MED11, MED12, MED13, MED13L, MED14, MED15, MED16, MED17, MED18, MED19, MED20, MED21, MED22, MED23, MED24, MED25, MED26, MED27, MED29, MED30, MED31, CCNC, CDK8 and CDC2L6/CDK11. The MED12, MED13, CCNC and CDK8 subunits form a distinct module termed the CDK8 module. Mediator containing the CDK8 module is less active than Mediator lacking this module in supporting transcriptional activation. Individual preparations of the Mediator complex lacking one or more distinct subunits have been variously termed ARC, CRSP, DRIP, PC2, SMCC and TRAP. The cylin/CDK pair formed by CCNC/CDK8 also associates with the large subunit of RNA polymerase II.

The protein localises to the nucleus. Functionally, component of the Mediator complex, a coactivator involved in regulated gene transcription of nearly all RNA polymerase II-dependent genes. Mediator functions as a bridge to convey information from gene-specific regulatory proteins to the basal RNA polymerase II transcription machinery. Mediator is recruited to promoters by direct interactions with regulatory proteins and serves as a scaffold for the assembly of a functional preinitiation complex with RNA polymerase II and the general transcription factors. Binds to and activates cyclin-dependent kinase CDK8 that phosphorylates the CTD (C-terminal domain) of the large subunit of RNA polymerase II (RNAp II), which may inhibit the formation of a transcription initiation complex. The protein is Cyclin-C (Ccnc) of Mus musculus (Mouse).